The chain runs to 524 residues: Lycopene epsilon cyclase, chloroplastic (524 aa).

A chloroplast-targeting transit peptide spans 1 to 45; it reads MECVGARNFAAMAVSTFPSWSCRRKFPVVKRYSYRNIRFGLCSVR. 111 to 139 provides a ligand contact to NAD(+); the sequence is LVVIGCGPAGLALAAESAKLGLKVGLIGP. A run of 2 helical transmembrane segments spans residues 441 to 461 and 475 to 495; these read FFLFGLALIVQFDTEGIRSFF and FLGSTLTSGDLVLFALYMFVI.

It belongs to the lycopene cyclase family.

It is found in the plastid. Its subcellular location is the chloroplast membrane. The catalysed reaction is a carotenoid psi-end group = a carotenoid epsilon-end group. It functions in the pathway carotenoid biosynthesis; alpha-zeacarotene biosynthesis. The protein operates within carotenoid biosynthesis; delta-carotene biosynthesis. Functionally, involved in carotenoid biosynthesis. Catalyzes the single epsilon-cyclization reaction which converts lycopene to delta-carotene and neurosporene to alpha-zeacarotene. Required for lutein biosynthesis. This Arabidopsis thaliana (Mouse-ear cress) protein is Lycopene epsilon cyclase, chloroplastic.